The sequence spans 337 residues: Large ribosomal subunit protein uL3 (337 aa).

The tract at residues 1-26 (MGHAHAPRRGSLGYSPRVRARSQKPK) is disordered.

This sequence belongs to the universal ribosomal protein uL3 family. Part of the 50S ribosomal subunit. Forms a cluster with proteins L14 and L24e.

Functionally, one of the primary rRNA binding proteins, it binds directly near the 3'-end of the 23S rRNA, where it nucleates assembly of the 50S subunit. The chain is Large ribosomal subunit protein uL3 from Methanocella arvoryzae (strain DSM 22066 / NBRC 105507 / MRE50).